Reading from the N-terminus, the 100-residue chain is NADH-quinone oxidoreductase subunit K 2 (100 aa).

3 consecutive transmembrane segments (helical) span residues 4 to 24 (LHSY…GVLI), 29 to 49 (IVIF…FIAL), and 60 to 80 (IFVF…LALM).

It belongs to the complex I subunit 4L family. NDH-1 is composed of 14 different subunits. Subunits NuoA, H, J, K, L, M, N constitute the membrane sector of the complex.

It is found in the cell inner membrane. It carries out the reaction a quinone + NADH + 5 H(+)(in) = a quinol + NAD(+) + 4 H(+)(out). Functionally, NDH-1 shuttles electrons from NADH, via FMN and iron-sulfur (Fe-S) centers, to quinones in the respiratory chain. The immediate electron acceptor for the enzyme in this species is believed to be ubiquinone. Couples the redox reaction to proton translocation (for every two electrons transferred, four hydrogen ions are translocated across the cytoplasmic membrane), and thus conserves the redox energy in a proton gradient. In Geobacter metallireducens (strain ATCC 53774 / DSM 7210 / GS-15), this protein is NADH-quinone oxidoreductase subunit K 2.